The primary structure comprises 253 residues: Phosphoadenosine 5'-phosphosulfate reductase (253 aa).

The active-site Nucleophile; cysteine thiosulfonate intermediate is C239.

Belongs to the PAPS reductase family. CysH subfamily.

Its subcellular location is the cytoplasm. The enzyme catalyses [thioredoxin]-disulfide + sulfite + adenosine 3',5'-bisphosphate + 2 H(+) = [thioredoxin]-dithiol + 3'-phosphoadenylyl sulfate. It functions in the pathway sulfur metabolism; hydrogen sulfide biosynthesis; sulfite from sulfate: step 3/3. Catalyzes the formation of sulfite from phosphoadenosine 5'-phosphosulfate (PAPS) using thioredoxin as an electron donor. This is Phosphoadenosine 5'-phosphosulfate reductase from Aliivibrio salmonicida (strain LFI1238) (Vibrio salmonicida (strain LFI1238)).